Reading from the N-terminus, the 366-residue chain is Galactoside alpha-(1,2)-fucosyltransferase 1 (366 aa).

Residues 1–8 lie on the Cytoplasmic side of the membrane; it reads MWPPSHRQ. Residues 9-25 traverse the membrane as a helical; Signal-anchor for type II membrane protein segment; that stretch reads LCLAFLLVCVLSVISFF. The Lumenal segment spans residues 26 to 366; the sequence is LHIHQDSFPH…LSSLWTLAKP (341 aa). N-linked (GlcNAc...) asparagine glycans are attached at residues Asn-66, Asn-302, and Asn-328.

Belongs to the glycosyltransferase 11 family.

Its subcellular location is the golgi apparatus. It localises to the golgi stack membrane. It carries out the reaction a beta-D-galactosyl-(1-&gt;4)-N-acetyl-beta-D-glucosaminyl derivative + GDP-beta-L-fucose = an alpha-L-Fuc-(1-&gt;2)-beta-D-Gal-(1-&gt;4)-beta-D-GlcNAc derivative + GDP + H(+). The enzyme catalyses a ganglioside GA1 + GDP-beta-L-fucose = a ganglioside Fuc-GA1 + GDP + H(+). The catalysed reaction is a beta-D-Gal-(1-&gt;3)-beta-D-GlcNAc-(1-&gt;3)-beta-D-Gal-(1-&gt;4)-beta-D-Glc-(1&lt;-&gt;1')-Cer(d18:1(4E)) + GDP-beta-L-fucose = alpha-L-fucosyl-(1-&gt;2)- beta-D-galactosyl-(1-&gt;3)-N-acetyl-beta-D-glucosaminyl-(1-&gt;3)-beta-D-galactosyl-(1-&gt;4)-beta-D-glucosyl-(1&lt;-&gt;1')-N-acylsphing-4-enine + GDP + H(+). It catalyses the reaction a neolactoside nLc4Cer(d18:1(4E)) + GDP-beta-L-fucose = a neolactoside IV(2)-alpha-Fuc-nLc4Cer(d18:1(4E)) + GDP + H(+). It carries out the reaction a ganglioside GM1 + GDP-beta-L-fucose = a ganglioside Fuc-GM1 + GDP + H(+). The enzyme catalyses beta-D-galactosyl-(1-&gt;3)-N-acetyl-D-galactosamine + GDP-beta-L-fucose = alpha-L-fucosyl-(1-&gt;2)-beta-D-galactosyl-(1-&gt;3)-N-acetyl-D-galactosamine + GDP + H(+). The protein operates within protein modification; protein glycosylation. Functionally, catalyzes the transfer of L-fucose, from a guanosine diphosphate-beta-L-fucose, to the terminal galactose residue of glycoconjugates through an alpha(1,2) linkage leading to H antigen synthesis that is an intermediate substrate in the synthesis of ABO blood group antigens. H antigen is essential for maturation of the glomerular layer of the main olfactory bulb, in cell migration and early cell-cell contacts during tumor associated angiogenesis. Preferentially fucosylates soluble lactose and to a lesser extent fucosylates glycolipids gangliosides GA1 and GM1a. This is Galactoside alpha-(1,2)-fucosyltransferase 1 from Pan troglodytes (Chimpanzee).